A 466-amino-acid polypeptide reads, in one-letter code: UDP-N-acetylmuramate--L-alanine ligase (466 aa).

114 to 120 (GTHGKTT) provides a ligand contact to ATP.

This sequence belongs to the MurCDEF family.

It is found in the cytoplasm. The enzyme catalyses UDP-N-acetyl-alpha-D-muramate + L-alanine + ATP = UDP-N-acetyl-alpha-D-muramoyl-L-alanine + ADP + phosphate + H(+). The protein operates within cell wall biogenesis; peptidoglycan biosynthesis. In terms of biological role, cell wall formation. This chain is UDP-N-acetylmuramate--L-alanine ligase, found in Chlorobium phaeobacteroides (strain DSM 266 / SMG 266 / 2430).